We begin with the raw amino-acid sequence, 382 residues long: Queuine tRNA-ribosyltransferase (382 aa).

Residue Asp94 is the Proton acceptor of the active site. Substrate is bound by residues 94 to 98 (DSGGF), Asp148, Gln192, and Gly219. The interval 250–256 (GVGKPED) is RNA binding. Asp269 serves as the catalytic Nucleophile. Residues 274–278 (TRNAR) form an RNA binding; important for wobble base 34 recognition region. Zn(2+) is bound by residues Cys307, Cys309, Cys312, and His338.

The protein belongs to the queuine tRNA-ribosyltransferase family. In terms of assembly, homodimer. Within each dimer, one monomer is responsible for RNA recognition and catalysis, while the other monomer binds to the replacement base PreQ1. Zn(2+) is required as a cofactor.

The enzyme catalyses 7-aminomethyl-7-carbaguanine + guanosine(34) in tRNA = 7-aminomethyl-7-carbaguanosine(34) in tRNA + guanine. The protein operates within tRNA modification; tRNA-queuosine biosynthesis. Its function is as follows. Catalyzes the base-exchange of a guanine (G) residue with the queuine precursor 7-aminomethyl-7-deazaguanine (PreQ1) at position 34 (anticodon wobble position) in tRNAs with GU(N) anticodons (tRNA-Asp, -Asn, -His and -Tyr). Catalysis occurs through a double-displacement mechanism. The nucleophile active site attacks the C1' of nucleotide 34 to detach the guanine base from the RNA, forming a covalent enzyme-RNA intermediate. The proton acceptor active site deprotonates the incoming PreQ1, allowing a nucleophilic attack on the C1' of the ribose to form the product. After dissociation, two additional enzymatic reactions on the tRNA convert PreQ1 to queuine (Q), resulting in the hypermodified nucleoside queuosine (7-(((4,5-cis-dihydroxy-2-cyclopenten-1-yl)amino)methyl)-7-deazaguanosine). The polypeptide is Queuine tRNA-ribosyltransferase (Haemophilus ducreyi (strain 35000HP / ATCC 700724)).